The sequence spans 75 residues: Translational regulator CsrA (75 aa).

It belongs to the CsrA/RsmA family. As to quaternary structure, homodimer; the beta-strands of each monomer intercalate to form a hydrophobic core, while the alpha-helices form wings that extend away from the core.

Its subcellular location is the cytoplasm. Functionally, a translational regulator that binds mRNA to regulate translation initiation and/or mRNA stability. Usually binds in the 5'-UTR at or near the Shine-Dalgarno sequence preventing ribosome-binding, thus repressing translation. Its main target seems to be the major flagellin gene, while its function is anatagonized by FliW. This Thermosipho melanesiensis (strain DSM 12029 / CIP 104789 / BI429) protein is Translational regulator CsrA.